We begin with the raw amino-acid sequence, 629 residues long: tRNA uridine 5-carboxymethylaminomethyl modification enzyme MnmG (629 aa).

FAD-binding positions include 13-18 (GGGHAG), V125, and S180. 273-287 (GPRYCPSIEDKVMRF) contacts NAD(+). Q370 contributes to the FAD binding site.

This sequence belongs to the MnmG family. As to quaternary structure, homodimer. Heterotetramer of two MnmE and two MnmG subunits. FAD serves as cofactor.

It localises to the cytoplasm. In terms of biological role, NAD-binding protein involved in the addition of a carboxymethylaminomethyl (cmnm) group at the wobble position (U34) of certain tRNAs, forming tRNA-cmnm(5)s(2)U34. This is tRNA uridine 5-carboxymethylaminomethyl modification enzyme MnmG from Klebsiella pneumoniae subsp. pneumoniae (strain ATCC 700721 / MGH 78578).